Here is a 325-residue protein sequence, read N- to C-terminus: Sel1-repeat-containing protein YbeQ (325 aa).

Sel1-like repeat units follow at residues 26 to 61 (EAQY…EQGH), 63 to 97 (EAQY…LQGH), 103 to 130 (ALGW…AESG), 132 to 167 (SYAQ…LQGH), 168 to 203 (SDAQ…QQGN), 205 to 239 (HAQF…AQGS), 242 to 275 (AYVN…ECND), and 280 to 305 (YNLA…LYRK).

This sequence to E.coli YbeT.

This Escherichia coli (strain K12) protein is Sel1-repeat-containing protein YbeQ (ybeQ).